A 415-amino-acid polypeptide reads, in one-letter code: MDYREFFSQFRHLSEKPGIGGKIKILPEDFVVIEDPLPQIFEGRKHAIFLLKKRNWDTMAVIKEIAKRAGISHRDIGFAGTKDRHAVTYQYISVPAGAKEKVESIQIRDVELRFVSYGRFIKLGHLLGNRFRIIIRDVEGSAFDRTKEIIRELREKGGFPNYFGYQRFGERRVVNHLIGKLLLQGEFDEAARLFLGYADGSMEGDEARRNFWETEDVDRALEEFPRFLRYERTLLYTYKKTGSWKKAFLSLPLPIMRIFIHAYQSYLFNLYLSRRIEELPLNEPLVGDIVVQVKGGIPYRDRTYRVTETNLNFVREKVKRGEAMVSGPLFGFAMRRAKGIPGELEEEILEGEGITLDAFKKLPKPMAEPGRRRELLIRPIGLTYGYLPETGMCFRFFLPKGVYATSVLREIMKDH.

Catalysis depends on Asp83, which acts as the Nucleophile. In terms of domain architecture, TRUD spans 158-378; sequence GFPNYFGYQR…PGRRRELLIR (221 aa).

This sequence belongs to the pseudouridine synthase TruD family.

The enzyme catalyses uridine(13) in tRNA = pseudouridine(13) in tRNA. Could be responsible for synthesis of pseudouridine from uracil-13 in transfer RNAs. This chain is Probable tRNA pseudouridine synthase D, found in Thermococcus gammatolerans (strain DSM 15229 / JCM 11827 / EJ3).